The sequence spans 144 residues: MAYKHILIAVDLSPESKVLVEKAVSMARPYNAKISLIHVDVNYSDLYTGLIDVNLGDMQKRISKETHHALTELSTNAGYPITETLSGSGDLGQVLVDAIKKYDMDLVVCGHHQDFWSKLMSSARQLINTVHVDMLIVPLRDEEE.

The protein belongs to the universal stress protein A family. In terms of assembly, homodimer.

The protein localises to the cytoplasm. Its function is as follows. Required for resistance to DNA-damaging agents. This chain is Universal stress protein A (uspA), found in Salmonella typhi.